Here is a 42-residue protein sequence, read N- to C-terminus: Photosystem I reaction center subunit IX (42 aa).

A helical transmembrane segment spans residues 7–27 (YLSTAPVLAAIWFAILAGLLI).

The protein belongs to the PsaJ family.

The protein localises to the plastid. It localises to the chloroplast thylakoid membrane. Its function is as follows. May help in the organization of the PsaE and PsaF subunits. The sequence is that of Photosystem I reaction center subunit IX from Zygnema circumcarinatum (Green alga).